A 285-amino-acid chain; its full sequence is Probable endonuclease 4 (285 aa).

Zn(2+) contacts are provided by H69, H109, E145, D179, H182, H216, D229, H231, and E261.

The protein belongs to the AP endonuclease 2 family. Requires Zn(2+) as cofactor.

It catalyses the reaction Endonucleolytic cleavage to 5'-phosphooligonucleotide end-products.. Functionally, endonuclease IV plays a role in DNA repair. It cleaves phosphodiester bonds at apurinic or apyrimidinic (AP) sites, generating a 3'-hydroxyl group and a 5'-terminal sugar phosphate. The sequence is that of Probable endonuclease 4 from Enterobacter sp. (strain 638).